The primary structure comprises 465 residues: Serine/threonine-protein kinase 38 (465 aa).

Position 2 is an N-acetylalanine (A2). The tract at residues 62-87 is interaction with S100B; the sequence is KRLRRSAHARKETEFLRLKRTRLGLE. T74 carries the phosphothreonine modification. The region spanning 89–382 is the Protein kinase domain; it reads FESLKVIGRG…VEEIKNNSFF (294 aa). Residues 95–103 and K118 each bind ATP; that span reads IGRGAFGEV. Residue D212 is the Proton acceptor of the active site. At S264 the chain carries Phosphoserine. A Phosphoserine; by autocatalysis modification is found at S281. Residues 306 to 311 carry the UFM1-interacting motif (UFIM) motif; the sequence is WSLGVI. An AGC-kinase C-terminal domain is found at 383–455; the sequence is EGVDWEHIRE…KRFEGLTARG (73 aa). T444 carries the phosphothreonine; by STK24/MST3 modification.

This sequence belongs to the protein kinase superfamily. AGC Ser/Thr protein kinase family. As to quaternary structure, homodimeric S100B binds two molecules of STK38. Interacts with MOB1 and MOB2. Interacts with MAP3K1 and MAP3K2 (via the kinase domain). Forms a tripartite complex with MOBKL1B and STK3/MST2. Interacts with MICAL1; leading to inhibit the protein kinase activity by antagonizing activation by MST1/STK4. Requires Mg(2+) as cofactor. Post-translationally, ISGylated. Phosphorylated by STK3/MST2 and this is enhanced by MOBKL1B.

The protein localises to the nucleus. The protein resides in the cytoplasm. Its subcellular location is the chromosome. It carries out the reaction L-seryl-[protein] + ATP = O-phospho-L-seryl-[protein] + ADP + H(+). It catalyses the reaction L-threonyl-[protein] + ATP = O-phospho-L-threonyl-[protein] + ADP + H(+). Its activity is regulated as follows. Activated by binding of S100B which releases autoinhibitory N-lobe interactions, enabling ATP to bind and the autophosphorylation of Ser-281. Thr-444 then undergoes calcium-dependent phosphorylation by STK24/MST3. Interactions between phosphorylated Thr-444 and the N-lobe promote additional structural changes that complete the activation of the kinase. Autoinhibition is also released by the binding of MOB1/MOBKL1A and MOB2/HCCA2 to the N-terminal of STK38. Functionally, serine/threonine-protein kinase that acts as a negative regulator of MAP3K1/2 signaling. Converts MAP3K2 from its phosphorylated form to its non-phosphorylated form and inhibits autophosphorylation of MAP3K2. Acts as an ufmylation 'reader' in a kinase-independent manner: specifically recognizes and binds mono-ufmylated histone H4 in response to DNA damage, promoting the recruitment of SUV39H1 to the double-strand breaks, resulting in ATM activation. In Bos taurus (Bovine), this protein is Serine/threonine-protein kinase 38 (STK38).